We begin with the raw amino-acid sequence, 640 residues long: MSRVIGIDLGTTNSCVAVMEGGEPVVIANAEGSRTTPSMIAFAESGERLVGQQAKRQAVTNPENTLYAIKRLIGRKFETEAVKKDIAISPFKIVKADNSDAWVEVRGQKYSPPEISAMVLQKMKKTAEDYLGEAVTDAVITVPAYFDDSQRQATKDAGKIAGLNVLRIINEPTAAALAYGLDKKKDEKIAVFDLGGGTFDVSILELGEGVFEVKSTNGDTFLGGEDFDQKIIDHIADEFKKDQGIDLRGDKMALQRLKEAGEKAKCELSTSLETDINLPFITADASGPKHLTMKLTRAKLESICAELIAKLEGPCRTALKDAGLSASDIDEVILVGGMTRMPIVQKKVQDIFGKLPNRGVNPDEVVAIGAAIQGGVLRGDVKDVLLLDVTPLSLGIETLGGVLTKLIDKNSTIPCRKSQVFSTAADNQPAVSIHVLQGEREMAADNKTLGNFELSGIPAAPRGVPQIEVTFDIDANGIVHVSAKDLGTGKEQSIRITASSGLSKEEVEKMVREAEAHAADDKKKRELIEAKNQADNLIYQTEKSLTEFGDKIDASEKQKIEEGVAALKKALEGSDADEIKKASDSLMQASHKLAEAVYAKTQGAGAEGGEQPHGEQEAGGAAKGEKVVDADFEEVKDDKK.

A Phosphothreonine; by autocatalysis modification is found at Thr198. Residues 600–640 (KTQGAGAEGGEQPHGEQEAGGAAKGEKVVDADFEEVKDDKK) form a disordered region. The span at 630 to 640 (ADFEEVKDDKK) shows a compositional bias: acidic residues.

It belongs to the heat shock protein 70 family.

Its function is as follows. Acts as a chaperone. In Citrifermentans bemidjiense (strain ATCC BAA-1014 / DSM 16622 / JCM 12645 / Bem) (Geobacter bemidjiensis), this protein is Chaperone protein DnaK.